The following is a 417-amino-acid chain: DNA primase small subunit (417 aa).

Methionine 1 carries the N-acetylmethionine modification. Catalysis depends on residues glutamate 44, aspartate 109, and aspartate 111. Mg(2+)-binding residues include aspartate 109 and aspartate 111. Mn(2+)-binding residues include aspartate 109 and aspartate 111. Residue 109–111 (DID) coordinates a ribonucleoside 5'-triphosphate. Positions 121, 122, 128, and 131 each coordinate Zn(2+). The short motif at 121-131 (CCSSADICSKC) is the Zinc knuckle motif element. 160-166 (SGRRGVH) lines the a ribonucleoside 5'-triphosphate pocket. Aspartate 305 is a Mg(2+) binding site. Aspartate 305 is a binding site for Mn(2+). A ribonucleoside 5'-triphosphate contacts are provided by residues 314–317 (HLLK) and histidine 323.

It belongs to the eukaryotic-type primase small subunit family. Heterodimer of a catalytic subunit PRIM1 and a regulatory subunit PRIM2, also known as the DNA primase complex. Interacts with PRIM2/p58 (via C-terminus). Component of the alpha DNA polymerase complex (also known as the alpha DNA polymerase-primase complex) consisting of four subunits: the catalytic subunit POLA1, the regulatory subunit POLA2, and the primase complex subunits PRIM1 and PRIM2 respectively. Within the complex, POLA1 directly interacts with PRIM2. The cofactor is Mg(2+). It depends on Mn(2+) as a cofactor.

It catalyses the reaction ssDNA + n NTP = ssDNA/pppN(pN)n-1 hybrid + (n-1) diphosphate.. Its activity is regulated as follows. The presence of the regulatory subunit PRIM2/p58 accelerates the kinetics of initiation and primer extension. Catalytic subunit of the DNA primase complex and component of the DNA polymerase alpha complex (also known as the alpha DNA polymerase-primase complex) which play an essential role in the initiation of DNA synthesis. During the S phase of the cell cycle, the DNA polymerase alpha complex (composed of a catalytic subunit POLA1, an accessory subunit POLA2 and two primase subunits, the catalytic subunit PRIM1 and the regulatory subunit PRIM2) is recruited to DNA at the replicative forks via direct interactions with MCM10 and WDHD1. The primase subunit of the polymerase alpha complex initiates DNA synthesis by oligomerising short RNA primers on both leading and lagging strands. These primers are initially extended by the polymerase alpha catalytic subunit and subsequently transferred to polymerase delta and polymerase epsilon for processive synthesis on the lagging and leading strand, respectively. In the primase complex, both subunits are necessary for the initial di-nucleotide formation, but the extension of the primer depends only on the catalytic subunit. Can add both ribo- and deoxynucleotides during elongation of the primers. Synthesizes 9-mer RNA primers (also known as the 'unit length' RNA primers). Incorporates only ribonucleotides in the presence of ribo- and deoxy-nucleotide triphosphates (rNTPs, dNTPs). Requires template thymine or cytidine to start the RNA primer synthesis, with an adenine or guanine at its 5'-end. Binds single stranded DNA. This chain is DNA primase small subunit (Prim1), found in Mus musculus (Mouse).